A 331-amino-acid polypeptide reads, in one-letter code: Protein-methionine-sulfoxide reductase catalytic subunit MsrP (331 aa).

A signal peptide (tat-type signal) is located at residues 1 to 57 (MLIKKTLRAALAGDDIPRSEITPRAVFEHRRRILQAAGAAAAGGLVGAHGLALAAYA). Mo-molybdopterin is bound by residues Asn-90, 93 to 94 (YE), Cys-148, Thr-183, Asn-231, Arg-236, and 247 to 249 (SAK).

The protein belongs to the MsrP family. As to quaternary structure, heterodimer of a catalytic subunit (MsrP) and a heme-binding subunit (MsrQ). Mo-molybdopterin serves as cofactor. Post-translationally, predicted to be exported by the Tat system. The position of the signal peptide cleavage has not been experimentally proven.

Its subcellular location is the periplasm. It catalyses the reaction L-methionyl-[protein] + a quinone + H2O = L-methionyl-(S)-S-oxide-[protein] + a quinol. The catalysed reaction is L-methionyl-[protein] + a quinone + H2O = L-methionyl-(R)-S-oxide-[protein] + a quinol. Its function is as follows. Part of the MsrPQ system that repairs oxidized periplasmic proteins containing methionine sulfoxide residues (Met-O), using respiratory chain electrons. Thus protects these proteins from oxidative-stress damage caused by reactive species of oxygen and chlorine generated by the host defense mechanisms. MsrPQ is essential for the maintenance of envelope integrity under bleach stress, rescuing a wide series of structurally unrelated periplasmic proteins from methionine oxidation. The catalytic subunit MsrP is non-stereospecific, being able to reduce both (R-) and (S-) diastereoisomers of methionine sulfoxide. This is Protein-methionine-sulfoxide reductase catalytic subunit MsrP from Burkholderia mallei (strain ATCC 23344).